The primary structure comprises 393 residues: Formate-dependent phosphoribosylglycinamide formyltransferase (393 aa).

N(1)-(5-phospho-beta-D-ribosyl)glycinamide is bound by residues 22-23 (EL) and Glu82. ATP is bound by residues Arg114, Lys155, 160 to 165 (SSGHGQ), 195 to 198 (EGFI), and Glu203. The region spanning 119–308 (RLAAEELGLP…QFALHARAIL (190 aa)) is the ATP-grasp domain. Mg(2+) contacts are provided by Glu267 and Glu279. Residues Asp286, Lys356, and 363-364 (RR) each bind N(1)-(5-phospho-beta-D-ribosyl)glycinamide.

It belongs to the PurK/PurT family. In terms of assembly, homodimer.

The catalysed reaction is N(1)-(5-phospho-beta-D-ribosyl)glycinamide + formate + ATP = N(2)-formyl-N(1)-(5-phospho-beta-D-ribosyl)glycinamide + ADP + phosphate + H(+). It functions in the pathway purine metabolism; IMP biosynthesis via de novo pathway; N(2)-formyl-N(1)-(5-phospho-D-ribosyl)glycinamide from N(1)-(5-phospho-D-ribosyl)glycinamide (formate route): step 1/1. Involved in the de novo purine biosynthesis. Catalyzes the transfer of formate to 5-phospho-ribosyl-glycinamide (GAR), producing 5-phospho-ribosyl-N-formylglycinamide (FGAR). Formate is provided by PurU via hydrolysis of 10-formyl-tetrahydrofolate. This is Formate-dependent phosphoribosylglycinamide formyltransferase from Haemophilus ducreyi (strain 35000HP / ATCC 700724).